Reading from the N-terminus, the 452-residue chain is Adenosylmethionine-8-amino-7-oxononanoate aminotransferase (452 aa).

116–117 (GS) is a pyridoxal 5'-phosphate binding site. Tyr-152 contributes to the substrate binding site. Asp-257 is a binding site for pyridoxal 5'-phosphate. Substrate is bound by residues Lys-286, Gly-321, and Arg-414. Residue Lys-286 is modified to N6-(pyridoxal phosphate)lysine.

This sequence belongs to the class-III pyridoxal-phosphate-dependent aminotransferase family. BioA subfamily. Homodimer. The cofactor is pyridoxal 5'-phosphate.

It is found in the cytoplasm. It carries out the reaction (8S)-8-amino-7-oxononanoate + S-adenosyl-L-methionine = S-adenosyl-4-methylsulfanyl-2-oxobutanoate + (7R,8S)-7,8-diammoniononanoate. The protein operates within cofactor biosynthesis; biotin biosynthesis; 7,8-diaminononanoate from 8-amino-7-oxononanoate (SAM route): step 1/1. Its function is as follows. Catalyzes the transfer of the alpha-amino group from S-adenosyl-L-methionine (SAM) to 7-keto-8-aminopelargonic acid (KAPA) to form 7,8-diaminopelargonic acid (DAPA). It is the only aminotransferase known to utilize SAM as an amino donor. This is Adenosylmethionine-8-amino-7-oxononanoate aminotransferase from Staphylococcus aureus (strain NCTC 8325 / PS 47).